We begin with the raw amino-acid sequence, 173 residues long: MAAMASFGALALLLLSGLSCCSAEACLEPQITPSYYTTSDAVISTETVFIVEISLTCKNRVQNMALYADVSGKQFPVTRGQDVGRYQVSWSLEHKSAHAGTYEVRFFDEESYSLLRKAQRNNEDVSIIPPLFTVSVDHRGTWNGPWVSTEVLAAAIGIVIYYLAFSAKSHIQA.

An N-terminal signal peptide occupies residues 1–23; it reads MAAMASFGALALLLLSGLSCCSA. Topologically, residues 24–144 are lumenal; sequence EACLEPQITP…SVDHRGTWNG (121 aa). C26 and C57 form a disulfide bridge. K73 is covalently cross-linked (Glycyl lysine isopeptide (Lys-Gly) (interchain with G-Cter in ubiquitin)). The chain crosses the membrane as a helical span at residues 145–165; that stretch reads PWVSTEVLAAAIGIVIYYLAF. Residues 166–173 lie on the Cytoplasmic side of the membrane; sequence SAKSHIQA.

This sequence belongs to the TRAP-delta family. As to quaternary structure, heterotetramer of TRAP-alpha, TRAP-beta, TRAP-delta and TRAP-gamma.

The protein resides in the endoplasmic reticulum membrane. Its function is as follows. TRAP proteins are part of a complex whose function is to bind calcium to the ER membrane and thereby regulate the retention of ER resident proteins. The sequence is that of Translocon-associated protein subunit delta (Ssr4) from Rattus norvegicus (Rat).